A 255-amino-acid polypeptide reads, in one-letter code: Undecaprenyl-diphosphatase (255 aa).

6 consecutive transmembrane segments (helical) span residues Met-1–Ile-21, Ile-75–Gln-95, Leu-96–Val-116, Thr-174–Val-194, Gly-203–Ile-223, and Asn-234–Val-254.

This sequence belongs to the UppP family.

It localises to the cell membrane. The enzyme catalyses di-trans,octa-cis-undecaprenyl diphosphate + H2O = di-trans,octa-cis-undecaprenyl phosphate + phosphate + H(+). Functionally, catalyzes the dephosphorylation of undecaprenyl diphosphate (UPP). This Methanococcus aeolicus (strain ATCC BAA-1280 / DSM 17508 / OCM 812 / Nankai-3) protein is Undecaprenyl-diphosphatase.